Here is a 247-residue protein sequence, read N- to C-terminus: Carboxy-S-adenosyl-L-methionine synthase (247 aa).

S-adenosyl-L-methionine-binding positions include Y39, 64–66, 89–90, 117–118, N132, and R199; these read GCS, DN, and DI.

This sequence belongs to the class I-like SAM-binding methyltransferase superfamily. Cx-SAM synthase family. In terms of assembly, homodimer.

It catalyses the reaction prephenate + S-adenosyl-L-methionine = carboxy-S-adenosyl-L-methionine + 3-phenylpyruvate + H2O. Its function is as follows. Catalyzes the conversion of S-adenosyl-L-methionine (SAM) to carboxy-S-adenosyl-L-methionine (Cx-SAM). This chain is Carboxy-S-adenosyl-L-methionine synthase, found in Salmonella agona (strain SL483).